The following is a 213-amino-acid chain: Small ribosomal subunit protein uS5 (213 aa).

The region spanning 54 to 117 (LKSETVDVRL…RNAKLNIIPV (64 aa)) is the S5 DRBM domain.

Belongs to the universal ribosomal protein uS5 family. Part of the 30S ribosomal subunit. Contacts protein S4.

Functionally, with S4 and S12 plays an important role in translational accuracy. The polypeptide is Small ribosomal subunit protein uS5 (Hyperthermus butylicus (strain DSM 5456 / JCM 9403 / PLM1-5)).